Reading from the N-terminus, the 190-residue chain is RNA-binding protein OPG065 (190 aa).

Residues Tyr5–Thr70 enclose the Z-binding domain. The DRBM domain maps to Asn117–Gly184.

Belongs to the orthopoxvirus OPG065 family. As to quaternary structure, interacts with host G1P2/ISG15. Interacts with host EIF2AK2/PKR. Interacts with host ZBP1.

RNA-binding protein that plays a role in the inhibition of multiple cellular antiviral responses activated by double-stranded RNA (dsRNA), such as inhibition of PKR activation, necroptosis, and IFN-mediated antiviral activities. Recognizes and binds Z-RNA structures via its Z-binding domain and dsRNA via its DRBM domain: RNA-binding activity is required to escape host ZBP1-dependent necroptosis. Mechanistically, the Z-binding domain binds Z-RNAs that are produced during vaccinia virus infection, thereby competing with Z-RNA detection by host ZBP1, suppressing ZBP1-dependent necroptosis. Acts as a key inhibitor of the interferon response by blocking the phosphorylation and subsequent activation of IRF3 and IRF7 kinases that are required for interferon-alpha gene expression. Inhibits NF-kappa-B activation and the ubiquitin-like protein ISG15, which is an early antiviral protein. The binding with host ISG15 subsequently blocks host ISGylation. This Homo sapiens (Human) protein is RNA-binding protein OPG065 (OPG065).